Here is an 89-residue protein sequence, read N- to C-terminus: Small ribosomal subunit protein uS14A (89 aa).

The protein belongs to the universal ribosomal protein uS14 family. Part of the 30S ribosomal subunit. Contacts proteins S3 and S10.

Binds 16S rRNA, required for the assembly of 30S particles and may also be responsible for determining the conformation of the 16S rRNA at the A site. The chain is Small ribosomal subunit protein uS14A from Staphylococcus aureus (strain MRSA252).